An 80-amino-acid polypeptide reads, in one-letter code: Acyl carrier protein (80 aa).

In terms of domain architecture, Carrier spans 2 to 77; that stretch reads SDTLKRLQKI…DALNYIENKI (76 aa). Ser-37 carries the post-translational modification O-(pantetheine 4'-phosphoryl)serine.

It belongs to the acyl carrier protein (ACP) family. Post-translationally, 4'-phosphopantetheine is transferred from CoA to a specific serine of apo-ACP by AcpS. This modification is essential for activity because fatty acids are bound in thioester linkage to the sulfhydryl of the prosthetic group.

The protein localises to the plastid. It is found in the chloroplast. It functions in the pathway lipid metabolism; fatty acid biosynthesis. Carrier of the growing fatty acid chain in fatty acid biosynthesis. This is Acyl carrier protein from Cylindrotheca sp. (strain N1) (Marine diatom).